We begin with the raw amino-acid sequence, 325 residues long: Sel1-repeat-containing protein YbeQ (325 aa).

8 Sel1-like repeats span residues 26 to 61 (EAQY…EQGH), 63 to 97 (EAQY…LQGH), 103 to 130 (ALGW…AESG), 132 to 167 (SYAQ…LQGH), 168 to 203 (SDAQ…QQGN), 205 to 239 (HAQF…AQGS), 242 to 275 (AYVN…ECND), and 280 to 305 (YNLA…LYRK).

To E.coli YbeT.

The polypeptide is Sel1-repeat-containing protein YbeQ (ybeQ) (Escherichia coli (strain K12)).